The following is a 765-amino-acid chain: LPS-assembly protein LptD (765 aa).

The signal sequence occupies residues 1-18; it reads MQIRYFLALSLLPQLVLA.

It belongs to the LptD family. Component of the lipopolysaccharide transport and assembly complex. Interacts with LptE and LptA.

It localises to the cell outer membrane. Functionally, together with LptE, is involved in the assembly of lipopolysaccharide (LPS) at the surface of the outer membrane. This is LPS-assembly protein LptD from Shewanella sp. (strain MR-4).